A 363-amino-acid chain; its full sequence is MAAAAMAAAAGGGAGAARSLSRFRGCLAGALLGDCVGSFYEAHDTVDLTSVLRHVQSLEPDPGTPGSERTEALYYTDDTAMARALVQSLLAKEAFDEVDMAHRFAQEYKKDPDRGYGAGVVTVFKKLLNPKCRDVFEPARAQFNGKGSYGNGGAMRVAGISLAYSSVQDVQKFARLSAQLTHASSLGYNGAILQALAVHLALQGESSSEHFLKQLLGHMEDLEGDAQSVLDARELGMEERPYSSRLKKIGELLDQASVTREEVVSELGNGIAAFESVPTAIYCFLRCMEPDPEIPSAFNSLQRTLIYSISLGGDTDTIATMAGAIAGAYYGMDQVPESWQQSCEGYEETDILAQSLHRVFQKS.

E41 serves as a coordination point for Mg(2+). Phosphothreonine is present on T64. Positions 76, 77, and 78 each coordinate Mg(2+). D77 contributes to the substrate binding site. Substrate is bound by residues 146 to 152 (KGSYGNG), H182, L235, and I271. D314, D316, and T317 together coordinate Mg(2+).

This sequence belongs to the ADP-ribosylglycohydrolase family. In terms of assembly, monomer. Mg(2+) serves as cofactor. In terms of tissue distribution, ubiquitous. Expressed in skin fibroblasts.

The protein resides in the nucleus. It is found in the cytoplasm. The protein localises to the chromosome. It localises to the mitochondrion matrix. It carries out the reaction [(1''-&gt;2')-ADP-alpha-D-ribose](n) + H2O = [(1''-&gt;2')-ADP-alpha-D-ribose](n-1) + ADP-D-ribose. It catalyses the reaction 1''-O-acetyl-ADP-alpha-D-ribose + H2O = ADP-D-ribose + acetate + H(+). The enzyme catalyses O-(ADP-D-ribosyl)-L-seryl-[protein] + H2O = ADP-D-ribose + L-seryl-[protein]. The catalysed reaction is alpha-NAD(+) + H2O = ADP-D-ribose + nicotinamide + H(+). The protein undergoes a dramatic conformational switch from closed to open states upon substrate-binding, which enables specific substrate recognition for the 1''-O-linkage. The glutamate flap (Glu-41) blocks substrate entrance to Mg(2+) in the unliganded closed state. In presence of substrate, Glu-41 is ejected from the active site: this closed-to-open transition significantly widens the substrate-binding channel and precisely positions the scissile 1''-O-linkage for cleavage while securing tightly 2'- and 3'-hydroxyls of ADP-ribose. In terms of biological role, ADP-ribosylhydrolase that preferentially hydrolyzes the scissile alpha-O-linkage attached to the anomeric C1'' position of ADP-ribose and acts on different substrates, such as proteins ADP-ribosylated on serine and threonine, free poly(ADP-ribose) and O-acetyl-ADP-D-ribose. Specifically acts as a serine mono-ADP-ribosylhydrolase by mediating the removal of mono-ADP-ribose attached to serine residues on proteins, thereby playing a key role in DNA damage response. Serine ADP-ribosylation of proteins constitutes the primary form of ADP-ribosylation of proteins in response to DNA damage. Does not hydrolyze ADP-ribosyl-arginine, -cysteine, -diphthamide, or -asparagine bonds. Also able to degrade protein free poly(ADP-ribose), which is synthesized in response to DNA damage: free poly(ADP-ribose) acts as a potent cell death signal and its degradation by ADPRHL2 protects cells from poly(ADP-ribose)-dependent cell death, a process named parthanatos. Also hydrolyzes free poly(ADP-ribose) in mitochondria. Specifically digests O-acetyl-ADP-D-ribose, a product of deacetylation reactions catalyzed by sirtuins. Specifically degrades 1''-O-acetyl-ADP-D-ribose isomer, rather than 2''-O-acetyl-ADP-D-ribose or 3''-O-acetyl-ADP-D-ribose isomers. The protein is ADP-ribosylhydrolase ARH3 of Homo sapiens (Human).